A 442-amino-acid chain; its full sequence is Casein kinase 1-like protein 10 (442 aa).

Residues 9–278 (FKLGRKIGSG…LKRLFRDLFI (270 aa)) form the Protein kinase domain. Residues 15-23 (IGSGSFGEL) and K38 contribute to the ATP site. D128 acts as the Proton acceptor in catalysis. Disordered stretches follow at residues 299 to 323 (GSIS…ERNE) and 381 to 421 (AVMS…LSAR). Residues 305-317 (RPNPKPALDPPGP) are compositionally biased toward pro residues. A compositionally biased stretch (low complexity) spans 384 to 394 (SSSQPGSSGEL). The span at 400–417 (SKLFSSSAQKIQPVQETK) shows a compositional bias: polar residues.

It belongs to the protein kinase superfamily. CK1 Ser/Thr protein kinase family. Casein kinase I subfamily. Monomer. Autophosphorylated.

The protein resides in the cytoplasm. It is found in the cell junction. It localises to the plasmodesma. The catalysed reaction is L-seryl-[protein] + ATP = O-phospho-L-seryl-[protein] + ADP + H(+). The enzyme catalyses L-threonyl-[protein] + ATP = O-phospho-L-threonyl-[protein] + ADP + H(+). Casein kinases are operationally defined by their preferential utilization of acidic proteins such as caseins as substrates. It can phosphorylate a large number of proteins. This is Casein kinase 1-like protein 10 from Arabidopsis thaliana (Mouse-ear cress).